Here is a 172-residue protein sequence, read N- to C-terminus: Large ribosomal subunit protein uL10 (172 aa).

Belongs to the universal ribosomal protein uL10 family. As to quaternary structure, part of the ribosomal stalk of the 50S ribosomal subunit. The N-terminus interacts with L11 and the large rRNA to form the base of the stalk. The C-terminus forms an elongated spine to which L12 dimers bind in a sequential fashion forming a multimeric L10(L12)X complex.

In terms of biological role, forms part of the ribosomal stalk, playing a central role in the interaction of the ribosome with GTP-bound translation factors. In Methylorubrum populi (strain ATCC BAA-705 / NCIMB 13946 / BJ001) (Methylobacterium populi), this protein is Large ribosomal subunit protein uL10.